The following is a 307-amino-acid chain: NAD kinase (307 aa).

The active-site Proton acceptor is Asp85. NAD(+)-binding positions include Asp85–Gly86, Arg90, Asn159–Glu160, Asp189, and Thr200–Ser205.

Belongs to the NAD kinase family. A divalent metal cation serves as cofactor.

It is found in the cytoplasm. It catalyses the reaction NAD(+) + ATP = ADP + NADP(+) + H(+). Involved in the regulation of the intracellular balance of NAD and NADP, and is a key enzyme in the biosynthesis of NADP. Catalyzes specifically the phosphorylation on 2'-hydroxyl of the adenosine moiety of NAD to yield NADP. This Mycobacterium bovis (strain ATCC BAA-935 / AF2122/97) protein is NAD kinase.